The chain runs to 859 residues: DNA mismatch repair protein MutS (859 aa).

Residue 615–622 (GPNMGGKS) coordinates ATP.

It belongs to the DNA mismatch repair MutS family.

Its function is as follows. This protein is involved in the repair of mismatches in DNA. It is possible that it carries out the mismatch recognition step. This protein has a weak ATPase activity. The sequence is that of DNA mismatch repair protein MutS from Chromohalobacter salexigens (strain ATCC BAA-138 / DSM 3043 / CIP 106854 / NCIMB 13768 / 1H11).